A 1407-amino-acid polypeptide reads, in one-letter code: Adenylate cyclase, aggregation specific (1407 aa).

Residues 1 to 219 (MASSSPMFND…KGYLHQHYNS (219 aa)) are Cytoplasmic-facing. The tract at residues 28–131 (NELHDGNGGG…SNSVANGGHL (104 aa)) is disordered. A compositionally biased stretch (polar residues) spans 51–63 (LNKSQNQPYTQYN). Gly residues predominate over residues 64 to 75 (NGGGGGGGGGGH). 2 stretches are compositionally biased toward low complexity: residues 80–90 (HLNLNSITNNH) and 98–115 (PNTL…NNHS). The next 6 helical transmembrane spans lie at 220 to 240 (QIML…YGFT), 244 to 264 (IFML…SIFL), 276 to 296 (LFHP…LLEY), 304 to 324 (ILFL…LLFI), 325 to 345 (WMVM…FLES), and 353 to 373 (ISFV…LYVL). At 374–962 (EKFRKESFIA…KYVIINNVVE (589 aa)) the chain is on the cytoplasmic side. The Guanylate cyclase 1 domain maps to 438 to 661 (SILCFDIVQF…DTIARSHTLE (224 aa)). The Mg(2+) site is built by aspartate 443, isoleucine 444, and aspartate 488. Disordered stretches follow at residues 502-590 (AKKQ…EEIE), 751-799 (KSNN…VLGE), and 828-876 (NDIV…EEDF). Low complexity-rich tracts occupy residues 505–526 (QMPN…VNNI), 535–581 (NNNN…NNSG), and 752–795 (SNNN…SSSS). Over residues 828–846 (NDIVSPSLTSNSPILDTTV) the composition is skewed to polar residues. Residues 847–871 (NNNNNNNNTNNNNKNQNNIYGNNNN) are compositionally biased toward low complexity. Transmembrane regions (helical) follow at residues 963–979 (TKFF…MFYL), 992–1012 (SNVI…LSFT), 1018–1038 (PLVY…CTVL), 1071–1091 (LSVL…SILI), and 1105–1125 (IGFV…KLAM). The Guanylate cyclase 2 domain maps to 1189 to 1311 (SIMFIQIAGF…DTANTASRMQ (123 aa)). A helical transmembrane segment spans residues 1378–1398 (ATPAGIASPLSGTLLGEIGSF). Topologically, residues 1399 to 1407 (TTPRFHLSS) are cytoplasmic.

Belongs to the adenylyl cyclase class-4/guanylyl cyclase family. The cofactor is Mg(2+). In terms of tissue distribution, expressed throughout the structure in the tipped mound and finger. Expressed primarily in the prestalk region of the slug. In the early culminant expression is increased in the posterior prespore and anterior-most regions and expands into the developing stalk. In the mid and late culminant it is expressed throughout the stalk.

The protein resides in the membrane. The protein localises to the cell projection. It localises to the uropodium. The catalysed reaction is ATP = 3',5'-cyclic AMP + diphosphate. With respect to regulation, regulated by cyclic AMP receptor 1 through a guanine nucleotide binding protein and protein CRAC. Both positively and negatively regulated by extracellular cAMP; this regulation is part of the mechanism that establishes the oscillatory cAMP waves during aggregation. Its function is as follows. Coordinates cell aggregation by synthesizing the cAMP that influences differentiation and morphogenesis of cells within a developing multicellular structure. The chain is Adenylate cyclase, aggregation specific (acaA) from Dictyostelium discoideum (Social amoeba).